The chain runs to 272 residues: Glutamate racemase (272 aa).

Residues 10–11 (DS) and 42–43 (YG) each bind substrate. Cys74 functions as the Proton donor/acceptor in the catalytic mechanism. 75–76 (NT) is a binding site for substrate. The active-site Proton donor/acceptor is Cys185. 186 to 187 (TH) is a binding site for substrate.

The protein belongs to the aspartate/glutamate racemases family.

It carries out the reaction L-glutamate = D-glutamate. It participates in cell wall biogenesis; peptidoglycan biosynthesis. In terms of biological role, provides the (R)-glutamate required for cell wall biosynthesis. The protein is Glutamate racemase of Bacillus velezensis (strain DSM 23117 / BGSC 10A6 / LMG 26770 / FZB42) (Bacillus amyloliquefaciens subsp. plantarum).